Here is a 64-residue protein sequence, read N- to C-terminus: Large ribosomal subunit protein bL28 (64 aa).

The protein belongs to the bacterial ribosomal protein bL28 family.

The chain is Large ribosomal subunit protein bL28 (rpmB) from Mycobacterium leprae (strain TN).